The following is a 175-amino-acid chain: Large ribosomal subunit protein uL10 (175 aa).

Belongs to the universal ribosomal protein uL10 family. Part of the ribosomal stalk of the 50S ribosomal subunit. The N-terminus interacts with L11 and the large rRNA to form the base of the stalk. The C-terminus forms an elongated spine to which L12 dimers bind in a sequential fashion forming a multimeric L10(L12)X complex.

Functionally, forms part of the ribosomal stalk, playing a central role in the interaction of the ribosome with GTP-bound translation factors. The chain is Large ribosomal subunit protein uL10 from Prochlorococcus marinus (strain NATL1A).